A 339-amino-acid polypeptide reads, in one-letter code: DNA-directed RNA polymerase subunit alpha (339 aa).

The alpha N-terminal domain (alpha-NTD) stretch occupies residues 1–233 (MVREEVAGST…DLFLPFLHAE (233 aa)). The segment at 266 to 339 (GIPLNCIFID…IDLLKNKLSF (74 aa)) is alpha C-terminal domain (alpha-CTD).

This sequence belongs to the RNA polymerase alpha chain family. In plastids the minimal PEP RNA polymerase catalytic core is composed of four subunits: alpha, beta, beta', and beta''. When a (nuclear-encoded) sigma factor is associated with the core the holoenzyme is formed, which can initiate transcription.

The protein localises to the plastid. Its subcellular location is the chloroplast. The enzyme catalyses RNA(n) + a ribonucleoside 5'-triphosphate = RNA(n+1) + diphosphate. In terms of biological role, DNA-dependent RNA polymerase catalyzes the transcription of DNA into RNA using the four ribonucleoside triphosphates as substrates. In Hordeum bulbosum (Bulbous barley), this protein is DNA-directed RNA polymerase subunit alpha.